A 371-amino-acid chain; its full sequence is Spermatogenic leucine zipper protein 1 (371 aa).

Coiled-coil stretches lie at residues 96–148 (EVSE…TVQD) and 177–289 (FPHI…QKEE). Residue S98 is modified to Phosphoserine. The tract at residues 110-120 (INKELVKKLLA) is helix-loop-helix motif. Residues 121–188 (SLDLGKKENA…HIQEENIRLR (68 aa)) are basic motif. S202 is subject to Phosphoserine. Positions 223–240 (KTLKNNGTHSPTQTNNES) are enriched in polar residues. The tract at residues 223–246 (KTLKNNGTHSPTQTNNESAKQELE) is disordered. The interval 245–266 (LEEQVKRLKEDTYSLHLIATLL) is leucine-zipper.

Phosphorylated by MAPK1/ERK2 and MAPK3/ERK1.

The protein resides in the cytoplasm. It localises to the nucleus. In terms of biological role, transcription factor that binds to the DNA sequence 5'-CANNTG-3'(E box) and the G-box motif. May play an important role in the regulation of cell proliferation and differentiation during spermatogenesis. This chain is Spermatogenic leucine zipper protein 1 (SPZ1), found in Bos taurus (Bovine).